A 743-amino-acid polypeptide reads, in one-letter code: NAD(P)H-quinone oxidoreductase subunit 5, chloroplastic (743 aa).

Transmembrane regions (helical) follow at residues 9–29, 40–60, 89–109, 125–145, 147–167, 185–205, 224–244, 258–278, 284–304, 327–347, 354–374, 396–416, 425–445, 551–571, 607–627, and 723–743; these read WIIP…LLLF, WAFQ…NLSI, IDPL…MVLI, FAYM…SNLI, IYIF…FWFT, GDFG…SFEF, VFVT…SAQF, TPIS…FLVA, FIVI…TVFF, LGYM…FHLI, ALLF…VGYC, NSFL…CFWS, WLYS…TAFY, LFPI…GIPF, VFSV…YKPV, and YLFF…FLNL.

The protein belongs to the complex I subunit 5 family. NDH is composed of at least 16 different subunits, 5 of which are encoded in the nucleus.

It is found in the plastid. The protein localises to the chloroplast thylakoid membrane. It carries out the reaction a plastoquinone + NADH + (n+1) H(+)(in) = a plastoquinol + NAD(+) + n H(+)(out). It catalyses the reaction a plastoquinone + NADPH + (n+1) H(+)(in) = a plastoquinol + NADP(+) + n H(+)(out). Its function is as follows. NDH shuttles electrons from NAD(P)H:plastoquinone, via FMN and iron-sulfur (Fe-S) centers, to quinones in the photosynthetic chain and possibly in a chloroplast respiratory chain. The immediate electron acceptor for the enzyme in this species is believed to be plastoquinone. Couples the redox reaction to proton translocation, and thus conserves the redox energy in a proton gradient. The protein is NAD(P)H-quinone oxidoreductase subunit 5, chloroplastic (ndhF) of Helianthus annuus (Common sunflower).